Here is a 418-residue protein sequence, read N- to C-terminus: Glutamyl-tRNA reductase (418 aa).

Substrate is bound by residues 49–52 (TCNR), Ser109, 114–116 (EPQ), and Gln120. Cys50 acts as the Nucleophile in catalysis. 189-194 (GAGETI) provides a ligand contact to NADP(+).

The protein belongs to the glutamyl-tRNA reductase family. Homodimer.

The catalysed reaction is (S)-4-amino-5-oxopentanoate + tRNA(Glu) + NADP(+) = L-glutamyl-tRNA(Glu) + NADPH + H(+). The protein operates within porphyrin-containing compound metabolism; protoporphyrin-IX biosynthesis; 5-aminolevulinate from L-glutamyl-tRNA(Glu): step 1/2. Functionally, catalyzes the NADPH-dependent reduction of glutamyl-tRNA(Glu) to glutamate 1-semialdehyde (GSA). The polypeptide is Glutamyl-tRNA reductase (Klebsiella pneumoniae subsp. pneumoniae (strain ATCC 700721 / MGH 78578)).